The primary structure comprises 358 residues: UDP-N-acetylglucosamine--N-acetylmuramyl-(pentapeptide) pyrophosphoryl-undecaprenol N-acetylglucosamine transferase (358 aa).

Residues 12–14 (TAG), R165, S195, and Q290 each bind UDP-N-acetyl-alpha-D-glucosamine.

Belongs to the glycosyltransferase 28 family. MurG subfamily.

The protein localises to the cell membrane. The enzyme catalyses di-trans,octa-cis-undecaprenyl diphospho-N-acetyl-alpha-D-muramoyl-L-alanyl-D-glutamyl-meso-2,6-diaminopimeloyl-D-alanyl-D-alanine + UDP-N-acetyl-alpha-D-glucosamine = di-trans,octa-cis-undecaprenyl diphospho-[N-acetyl-alpha-D-glucosaminyl-(1-&gt;4)]-N-acetyl-alpha-D-muramoyl-L-alanyl-D-glutamyl-meso-2,6-diaminopimeloyl-D-alanyl-D-alanine + UDP + H(+). It participates in cell wall biogenesis; peptidoglycan biosynthesis. Cell wall formation. Catalyzes the transfer of a GlcNAc subunit on undecaprenyl-pyrophosphoryl-MurNAc-pentapeptide (lipid intermediate I) to form undecaprenyl-pyrophosphoryl-MurNAc-(pentapeptide)GlcNAc (lipid intermediate II). The polypeptide is UDP-N-acetylglucosamine--N-acetylmuramyl-(pentapeptide) pyrophosphoryl-undecaprenol N-acetylglucosamine transferase (Clostridium tetani (strain Massachusetts / E88)).